The primary structure comprises 495 residues: Cobyric acid synthase (495 aa).

Residues 258–427 (GLRVAAVRLP…WHGLFDNDGF (170 aa)) form the GATase cobBQ-type domain. Cys-339 functions as the Nucleophile in the catalytic mechanism. Residue His-419 is part of the active site.

It belongs to the CobB/CobQ family. CobQ subfamily.

Its pathway is cofactor biosynthesis; adenosylcobalamin biosynthesis. In terms of biological role, catalyzes amidations at positions B, D, E, and G on adenosylcobyrinic A,C-diamide. NH(2) groups are provided by glutamine, and one molecule of ATP is hydrogenolyzed for each amidation. In Mycobacterium sp. (strain KMS), this protein is Cobyric acid synthase.